A 378-amino-acid polypeptide reads, in one-letter code: Deoxyhypusine synthase (378 aa).

NAD(+)-binding positions include 107-111 (SNLIS), 133-135 (SAG), glutamate 139, and aspartate 253. 138–139 (EE) contributes to the spermidine binding site. Aspartate 258 contacts spermidine. Glycine 300 contacts NAD(+). Histidine 305 contributes to the spermidine binding site. 325–326 (TG) is a binding site for NAD(+). Spermidine contacts are provided by residues 331-333 (GSD) and 340-346 (EAISWGK). Lysine 346 acts as the Nucleophile in catalysis. An NAD(+)-binding site is contributed by 359-360 (DA).

Belongs to the deoxyhypusine synthase family. NAD(+) is required as a cofactor.

It carries out the reaction [eIF5A protein]-L-lysine + spermidine = [eIF5A protein]-deoxyhypusine + propane-1,3-diamine. It participates in protein modification; eIF5A hypusination. Catalyzes the NAD-dependent oxidative cleavage of spermidine and the subsequent transfer of the butylamine moiety of spermidine to the epsilon-amino group of a specific lysine residue of the eIF-5A precursor protein to form the intermediate deoxyhypusine residue. The sequence is that of Deoxyhypusine synthase (DYS1) from Debaryomyces hansenii (strain ATCC 36239 / CBS 767 / BCRC 21394 / JCM 1990 / NBRC 0083 / IGC 2968) (Yeast).